We begin with the raw amino-acid sequence, 83 residues long: MKTLLLTLVVVTIVCLDFGHTLICYNDHGYIGKTTETCENGMTTCYEERWREARGTRIERGCGCYKVKPGVQMNCCKTDRCNG.

The N-terminal stretch at M1–T21 is a signal peptide. 4 disulfide bridges follow: C24-C45, C38-C62, C64-C75, and C76-C81.

It belongs to the three-finger toxin family. Short-chain subfamily. Type I alpha-neurotoxin sub-subfamily. In terms of tissue distribution, expressed by the venom gland.

It is found in the secreted. In terms of biological role, binds to muscle nicotinic acetylcholine receptor (nAChR) and inhibit acetylcholine from binding to the receptor, thereby impairing neuromuscular transmission. In Micrurus altirostris (Uruguayan coral snake), this protein is Three-finger toxin MALT0052C.